Reading from the N-terminus, the 510-residue chain is Nucleosome assembly protein 1-like 3 (510 aa).

Disordered regions lie at residues 1–99 (MAEA…LGTN) and 161–311 (PTEE…KRED). Residues 35 to 74 (SSSSSSSTSGSSSSSSTSGSSSSSGSGSSSSSSGSGSTSS) show a composition bias toward low complexity. Acidic residues predominate over residues 161–182 (PTEEECEWNSEDEEFSSDEEVQ). Basic and acidic residues-rich tracts occupy residues 200-229 (PKENPEVKAEEKEVPKEIPEVKDEEKEVPK), 235-246 (KAEEKADSKDCM), and 254-300 (EDPK…VDLK).

It belongs to the nucleosome assembly protein (NAP) family.

Its subcellular location is the nucleus. This Pongo abelii (Sumatran orangutan) protein is Nucleosome assembly protein 1-like 3 (NAP1L3).